Reading from the N-terminus, the 1001-residue chain is Serine/threonine-protein kinase TAO1-A (1001 aa).

Residues 28 to 281 form the Protein kinase domain; it reads FSDLREIGHG…SDELLKNMFV (254 aa). ATP-binding positions include 34–42 and K57; that span reads IGHGSFGAV. Catalysis depends on D151, which acts as the Proton acceptor. Disordered regions lie at residues 324 to 431 and 567 to 586; these read PAVE…HKSH and KEEL…EWLS. Low complexity predominate over residues 350–370; sequence SNQSIPSMSISASSQSSSVTS. Basic and acidic residues-rich tracts occupy residues 375–388 and 577–586; these read SDDK…EGDH and PKKEKQEWLS. 2 coiled-coil regions span residues 458–651 and 754–877; these read SELR…EHAM and KAVL…EIEA. Positions 911–1001 are disordered; sequence SHNPTGGPGP…ISNGSRMSYT (91 aa). Low complexity predominate over residues 921–930; the sequence is HWGHPMAGPP. Polar residues-rich tracts occupy residues 949–967 and 974–1001; these read GSVQ…NSPQ and SGGQ…MSYT.

Belongs to the protein kinase superfamily. STE Ser/Thr protein kinase family. STE20 subfamily.

It localises to the cytoplasm. The enzyme catalyses L-seryl-[protein] + ATP = O-phospho-L-seryl-[protein] + ADP + H(+). The catalysed reaction is L-threonyl-[protein] + ATP = O-phospho-L-threonyl-[protein] + ADP + H(+). In terms of biological role, serine/threonine-protein kinase involved in various processes such as p38/mapk14 stress-activated MAPK cascade, DNA damage response and regulation of cytoskeleton stability. Acts as an activator of the p38/MAPK14 stress-activated MAPK cascade by mediating phosphorylation and subsequent activation of upstream MAP kinase kinases. In response to DNA damage, involved in the G2/M transition DNA damage checkpoint by activating the p38/MAPK14 stress-activated MAPK cascade. The polypeptide is Serine/threonine-protein kinase TAO1-A (taok1-a) (Xenopus laevis (African clawed frog)).